Reading from the N-terminus, the 236-residue chain is tRNA1(Val) (adenine(37)-N6)-methyltransferase (236 aa).

The protein belongs to the methyltransferase superfamily. tRNA (adenine-N(6)-)-methyltransferase family.

Its subcellular location is the cytoplasm. It carries out the reaction adenosine(37) in tRNA1(Val) + S-adenosyl-L-methionine = N(6)-methyladenosine(37) in tRNA1(Val) + S-adenosyl-L-homocysteine + H(+). In terms of biological role, specifically methylates the adenine in position 37 of tRNA(1)(Val) (anticodon cmo5UAC). The sequence is that of tRNA1(Val) (adenine(37)-N6)-methyltransferase from Shewanella sp. (strain MR-7).